Here is a 177-residue protein sequence, read N- to C-terminus: Adenine phosphoribosyltransferase (177 aa).

The protein belongs to the purine/pyrimidine phosphoribosyltransferase family. As to quaternary structure, homodimer.

It is found in the cytoplasm. The enzyme catalyses AMP + diphosphate = 5-phospho-alpha-D-ribose 1-diphosphate + adenine. It functions in the pathway purine metabolism; AMP biosynthesis via salvage pathway; AMP from adenine: step 1/1. Functionally, catalyzes a salvage reaction resulting in the formation of AMP, that is energically less costly than de novo synthesis. The protein is Adenine phosphoribosyltransferase of Acidothermus cellulolyticus (strain ATCC 43068 / DSM 8971 / 11B).